The chain runs to 368 residues: Anhydro-N-acetylmuramic acid kinase (368 aa).

11–18 (GTSLDGID) contributes to the ATP binding site.

This sequence belongs to the anhydro-N-acetylmuramic acid kinase family.

It carries out the reaction 1,6-anhydro-N-acetyl-beta-muramate + ATP + H2O = N-acetyl-D-muramate 6-phosphate + ADP + H(+). It participates in amino-sugar metabolism; 1,6-anhydro-N-acetylmuramate degradation. The protein operates within cell wall biogenesis; peptidoglycan recycling. Its function is as follows. Catalyzes the specific phosphorylation of 1,6-anhydro-N-acetylmuramic acid (anhMurNAc) with the simultaneous cleavage of the 1,6-anhydro ring, generating MurNAc-6-P. Is required for the utilization of anhMurNAc either imported from the medium or derived from its own cell wall murein, and thus plays a role in cell wall recycling. This chain is Anhydro-N-acetylmuramic acid kinase, found in Sulfurimonas denitrificans (strain ATCC 33889 / DSM 1251) (Thiomicrospira denitrificans (strain ATCC 33889 / DSM 1251)).